The sequence spans 1258 residues: Structural polyprotein (1258 aa).

The interval 41–75 is host transcription inhibition; the sequence is PQAQQMQQLIAAVNTLAIRQNGTRTPGQQRRKRQP. The interval 59 to 114 is disordered; that stretch reads RQNGTRTPGQQRRKRQPNKPKRKQTPPKKQNPAKTKNKQKPQPPKPKKRKPGKRER. The Nuclear localization signal motif lies at 68–109; that stretch reads QQRRKRQPNKPKRKQTPPKKQNPAKTKNKQKPQPPKPKKRKP. Basic residues-rich tracts occupy residues 69-84 and 93-114; these read QRRKRQPNKPKRKQTP and TKNKQKPQPPKPKKRKPGKRER. The interval 96 to 124 is binding to the viral RNA; sequence KQKPQPPKPKKRKPGKRERKCMKIENDCI. The tract at residues 109-123 is ribosome-binding; that stretch reads PGKRERKCMKIENDC. Residues Cys123 and Cys138 are joined by a disulfide bond. In terms of domain architecture, Peptidase S3 spans 123 to 271; it reads CIFEVKLEGK…RITPEGTEEW (149 aa). His149 (charge relay system) is an active-site residue. The short motif at 154-164 is the Nuclear export signal element; the sequence is IDNPDLAKLAF. An interaction with spike glycoprotein E2 region spans residues 165 to 170; it reads KKSSKY. The Charge relay system role is filled by Asp171. The interval 193 to 203 is dimerization of the capsid protein; it reads PEGHYNWHHGA. Catalysis depends on Ser223, which acts as the Charge relay system. A dimerization of the capsid protein region spans residues 229 to 233; that stretch reads DNKGR. Residues 272–284 form a functions as an uncleaved signal peptide for the precursor of protein E3/E2 region; that stretch reads TALVTTACILSNL. Cystine bridges form between Cys279-Cys288, Cys293-Cys297, Cys296-Cys328, Cys356-Cys462, Cys359-Cys365, Cys428-Cys442, Cys490-Cys601, Cys538-Cys562, and Cys540-Cys557. An N-linked (GlcNAc...) asparagine; by host glycan is attached at Asn283. Residues 338-696 are Extracellular-facing; it reads GLTEDYKAYK…PHEIFSYYYG (359 aa). Interaction with host Mxra8 receptor regions lie at residues 363–366 and 399–401; these read QFCY and HSW. Residues 521–524 are interaction with host Mxra8 receptor; the sequence is TGNK. An N-linked (GlcNAc...) asparagine; by host glycan is attached at Asn537. The tract at residues 553 to 559 is interaction with host Mxra8 receptor; the sequence is EFDNCEV. Asn598 carries N-linked (GlcNAc...) asparagine; by host glycosylation. Residues 697–717 form a helical membrane-spanning segment; that stretch reads LYPATTVAVCVGLACVILLAL. Topologically, residues 718 to 758 are cytoplasmic; it reads SASCCLCVSARNKCLTPYALTPGAVVPCTLSLLCCAPRAKA. The segment at 726–730 is interaction with the capsid protein; that stretch reads SARNK. S-palmitoyl cysteine; by host attachment occurs at residues Cys731, Cys751, and Cys752. Residues 731–751 form a transient transmembrane before p62-6K protein processing region; the sequence is CLTPYALTPGAVVPCTLSLLC. A disulfide bond links Cys731 and Cys752. At 759–773 the chain is on the extracellular side; that stretch reads ATFAETAAYLWAENQ. The chain crosses the membrane as a helical span at residues 774-794; that stretch reads TVFWMQFAIPVACFMIVTYCL. Residues 795-796 lie on the Cytoplasmic side of the membrane; sequence RH. Residues 797–817 form a helical membrane-spanning segment; it reads LMLCCRTASFLVAVSLGMGAT. Extracellular segments lie at residues 818 to 819 and 820 to 1234; these read QA and YEHS…HTMG. Cystine bridges form between Cys868/Cys933, Cys881/Cys913, Cys882/Cys915, and Cys887/Cys897. The segment at 903-920 is E1 fusion peptide loop; the sequence is VYPFLWGGAYCFCDSENT. Residues Asn960 and Asn1089 are each glycosylated (N-linked (GlcNAc...) asparagine; by host). Disulfide bonds link Cys1078–Cys1090, Cys1120–Cys1195, Cys1125–Cys1199, and Cys1147–Cys1189. The helical transmembrane segment at 1235–1255 threads the bilayer; the sequence is GATVVIAIGITIFLIVTCIAF. Cys1252 carries the S-palmitoyl cysteine; by host lipid modification. Over 1256-1258 the chain is Cytoplasmic; that stretch reads SRH.

As to quaternary structure, homodimer. Homomultimer. Interacts with host karyopherin KPNA4; this interaction allows the nuclear import of the viral capsid protein. Interacts with spike glycoprotein E2. Interacts with host IRAK1; the interaction leads to inhibition of IRAK1-dependent signaling. The precursor of protein E3/E2 and E1 form a heterodimer shortly after synthesis. In terms of assembly, the precursor of protein E3/E2 and E1 form a heterodimer shortly after synthesis. Processing of the precursor of protein E3/E2 into E2 and E3 results in a heterodimer of the spike glycoproteins E2 and E1. Spike at virion surface are constituted of a trimer of E2-E1 heterodimers. After target cell attachment and endocytosis, E1 change conformation to form homotrimers. Interacts with 6K protein. As to quaternary structure, interacts with spike glycoprotein E1. Processing of the precursor of protein E3/E2 into E2 and E3 results in a heterodimer of the spike glycoproteins E2 and E1. Spike at virion surface are constituted of a trimer of E2-E1 heterodimers. Interacts with 6K protein. Interacts with host MXRA8; this interaction mediates virus entry. Oligomer. Interacts with spike glycoprotein E1. Interacts with spike glycoprotein E2. In terms of processing, structural polyprotein: Specific enzymatic cleavages in vivo yield mature proteins. Capsid protein is auto-cleaved during polyprotein translation, unmasking a signal peptide at the N-terminus of the precursor of E3/E2. The remaining polyprotein is then targeted to the host endoplasmic reticulum, where host signal peptidase cleaves it into pE2, 6K and E1 proteins. pE2 is further processed to mature E3 and E2 by host furin in trans-Golgi vesicle. Post-translationally, palmitoylated via thioester bonds. These palmitoylations may induce disruption of the C-terminus transmembrane. This would result in the reorientation of E2 C-terminus from lumenal to cytoplasmic side. N-glycosylated. In terms of processing, palmitoylated via thioester bonds.

The protein resides in the virion. The protein localises to the host cytoplasm. Its subcellular location is the host cell membrane. It is found in the host nucleus. It localises to the virion membrane. The protein resides in the host Golgi apparatus. The protein localises to the host trans-Golgi network. Its subcellular location is the host endoplasmic reticulum. It catalyses the reaction Autocatalytic release of the core protein from the N-terminus of the togavirus structural polyprotein by hydrolysis of a -Trp-|-Ser- bond.. Forms an icosahedral capsid with a T=4 symmetry composed of 240 copies of the capsid protein surrounded by a lipid membrane through which penetrate 80 spikes composed of trimers of E1-E2 heterodimers. The capsid protein binds to the viral RNA genome at a site adjacent to a ribosome binding site for viral genome translation following genome release. Possesses a protease activity that results in its autocatalytic cleavage from the nascent structural protein. Following its self-cleavage, the capsid protein transiently associates with ribosomes, and within several minutes the protein binds to viral RNA and rapidly assembles into icosahedric core particles. The resulting nucleocapsid eventually associates with the cytoplasmic domain of the spike glycoprotein E2 at the cell membrane, leading to budding and formation of mature virions. In case of infection, new virions attach to target cells and after clathrin-mediated endocytosis their membrane fuses with the host endosomal membrane. This leads to the release of the nucleocapsid into the cytoplasm, followed by an uncoating event necessary for the genomic RNA to become accessible. The uncoating might be triggered by the interaction of capsid proteins with ribosomes. Binding of ribosomes would release the genomic RNA since the same region is genomic RNA-binding and ribosome-binding. Specifically inhibits interleukin-1 receptor-associated kinase 1/IRAK1-dependent signaling during viral entry, representing a means by which the alphaviruses may evade innate immune detection and activation prior to viral gene expression. Functionally, provides the signal sequence for the translocation of the precursor of protein E3/E2 to the host endoplasmic reticulum. Furin-cleaved E3 remains associated with spike glycoprotein E1 and mediates pH protection of the latter during the transport via the secretory pathway. After virion release from the host cell, the assembly protein E3 is gradually released in the extracellular space. In terms of biological role, plays a role in viral attachment to target host cell, by binding to the cell receptor MXRA8. Synthesized as a p62 precursor which is processed by furin at the cell membrane just before virion budding, giving rise to E2-E1 heterodimer. The p62-E1 heterodimer is stable, whereas E2-E1 is unstable and dissociate at low pH. p62 is processed at the last step, presumably to avoid E1 fusion activation before its final export to cell surface. E2 C-terminus contains a transitory transmembrane that would be disrupted by palmitoylation, resulting in reorientation of the C-terminal tail from lumenal to cytoplasmic side. This step is critical since E2 C-terminus is involved in budding by interacting with capsid proteins. This release of E2 C-terminus in cytoplasm occurs lately in protein export, and precludes premature assembly of particles at the endoplasmic reticulum membrane. Its function is as follows. Acts as a viroporin that participates in virus glycoprotein processing and transport to the plasma membrane, cell permeabilization and budding of viral particles. Disrupts the calcium homeostasis of the cell, probably at the endoplasmic reticulum level. This leads to cytoplasmic calcium elevation. Because of its lipophilic properties, the 6K protein is postulated to influence the selection of lipids that interact with the transmembrane domains of the glycoproteins, which, in turn, affects the deformability of the bilayer required for the extreme curvature that occurs as budding proceeds. Present in low amount in virions, about 3% compared to viral glycoproteins. Class II viral fusion protein. Fusion activity is inactive as long as E1 is bound to E2 in mature virion. After virus attachment to target cell and endocytosis, acidification of the endosome induce dissociation of E1/E2 heterodimer and concomitant trimerization of the E1 subunits. This E1 trimer is fusion active, and promotes release of viral nucleocapsid in cytoplasm after endosome and viral membrane fusion. Efficient fusion requires the presence of cholesterol and sphingolipid in the target membrane. The protein is Structural polyprotein of Middelburg virus.